A 281-amino-acid polypeptide reads, in one-letter code: Shikimate dehydrogenase (NADP(+)) (281 aa).

Residues 19-21 (SFS) and threonine 66 contribute to the shikimate site. The active-site Proton acceptor is lysine 70. Shikimate contacts are provided by asparagine 91 and aspartate 104. NADP(+)-binding positions include 127–131 (GAGGA) and isoleucine 223. A shikimate-binding site is contributed by tyrosine 225. Glycine 246 contacts NADP(+).

This sequence belongs to the shikimate dehydrogenase family. In terms of assembly, homodimer.

The enzyme catalyses shikimate + NADP(+) = 3-dehydroshikimate + NADPH + H(+). Its pathway is metabolic intermediate biosynthesis; chorismate biosynthesis; chorismate from D-erythrose 4-phosphate and phosphoenolpyruvate: step 4/7. Functionally, involved in the biosynthesis of the chorismate, which leads to the biosynthesis of aromatic amino acids. Catalyzes the reversible NADPH linked reduction of 3-dehydroshikimate (DHSA) to yield shikimate (SA). The polypeptide is Shikimate dehydrogenase (NADP(+)) (Methanobrevibacter smithii (strain ATCC 35061 / DSM 861 / OCM 144 / PS)).